The sequence spans 234 residues: Phosphoglycolate phosphatase (234 aa).

The active-site Nucleophile is the aspartate 8. 2 residues coordinate Mg(2+): aspartate 8 and aspartate 10. A substrate-binding site is contributed by lysine 155. Mg(2+)-binding residues include aspartate 178 and aspartate 182.

It belongs to the archaeal SPP-like hydrolase family. It depends on Mg(2+) as a cofactor.

It catalyses the reaction 2-phosphoglycolate + H2O = glycolate + phosphate. Catalyzes the dephosphorylation of 2-phosphoglycolate. The chain is Phosphoglycolate phosphatase from Thermococcus sibiricus (strain DSM 12597 / MM 739).